The following is a 264-amino-acid chain: Glutamate racemase (264 aa).

Substrate-binding positions include 10–11 (DS) and 42–43 (YG). The Proton donor/acceptor role is filled by Cys-73. 74 to 75 (NT) serves as a coordination point for substrate. Cys-181 serves as the catalytic Proton donor/acceptor. A substrate-binding site is contributed by 182 to 183 (TH).

It belongs to the aspartate/glutamate racemases family.

The catalysed reaction is L-glutamate = D-glutamate. It functions in the pathway cell wall biogenesis; peptidoglycan biosynthesis. Functionally, provides the (R)-glutamate required for cell wall biosynthesis. The protein is Glutamate racemase of Thermoanaerobacter pseudethanolicus (strain ATCC 33223 / 39E) (Clostridium thermohydrosulfuricum).